We begin with the raw amino-acid sequence, 516 residues long: uncharacterized protein (516 aa).

2 PFTB repeats span residues arginine 45 to aspartate 86 and aspartate 401 to glutamate 443.

This is an uncharacterized protein from Bradyrhizobium diazoefficiens (strain JCM 10833 / BCRC 13528 / IAM 13628 / NBRC 14792 / USDA 110).